We begin with the raw amino-acid sequence, 463 residues long: Glutamate--tRNA ligase 2 (463 aa).

The short motif at 11 to 21 is the 'HIGH' region element; that stretch reads PSPTGYLHIGG. The short motif at 240-244 is the 'KMSKS' region element; the sequence is KLSKR. Lysine 243 contacts ATP.

Belongs to the class-I aminoacyl-tRNA synthetase family. Glutamate--tRNA ligase type 1 subfamily. In terms of assembly, monomer.

The protein localises to the cytoplasm. The enzyme catalyses tRNA(Glu) + L-glutamate + ATP = L-glutamyl-tRNA(Glu) + AMP + diphosphate. Catalyzes the attachment of glutamate to tRNA(Glu) in a two-step reaction: glutamate is first activated by ATP to form Glu-AMP and then transferred to the acceptor end of tRNA(Glu). The protein is Glutamate--tRNA ligase 2 of Campylobacter jejuni (strain RM1221).